We begin with the raw amino-acid sequence, 224 residues long: Uracil-DNA glycosylase (224 aa).

The active-site Proton acceptor is aspartate 65.

This sequence belongs to the uracil-DNA glycosylase (UDG) superfamily. UNG family.

The protein localises to the cytoplasm. It carries out the reaction Hydrolyzes single-stranded DNA or mismatched double-stranded DNA and polynucleotides, releasing free uracil.. Functionally, excises uracil residues from the DNA which can arise as a result of misincorporation of dUMP residues by DNA polymerase or due to deamination of cytosine. This chain is Uracil-DNA glycosylase, found in Buchnera aphidicola subsp. Baizongia pistaciae (strain Bp).